A 100-amino-acid polypeptide reads, in one-letter code: UPF0213 protein YhbQ (100 aa).

Residues 2–77 (TPWFLYLIRT…KQLTKRQKER (76 aa)) form the GIY-YIG domain.

The protein belongs to the UPF0213 family.

In Escherichia coli O81 (strain ED1a), this protein is UPF0213 protein YhbQ.